A 385-amino-acid polypeptide reads, in one-letter code: Aspartate/prephenate aminotransferase (385 aa).

L-aspartate-binding residues include Gly39, Trp125, and Asn175. Lys234 is subject to N6-(pyridoxal phosphate)lysine. Residue Arg361 participates in L-aspartate binding.

This sequence belongs to the class-I pyridoxal-phosphate-dependent aminotransferase family. In terms of assembly, homodimer. The cofactor is pyridoxal 5'-phosphate.

Its subcellular location is the cytoplasm. The catalysed reaction is L-aspartate + 2-oxoglutarate = oxaloacetate + L-glutamate. It catalyses the reaction L-arogenate + oxaloacetate = prephenate + L-aspartate. In terms of biological role, catalyzes the reversible conversion of aspartate and 2-oxoglutarate to glutamate and oxaloacetate. Can also transaminate prephenate in the presence of aspartate. The sequence is that of Aspartate/prephenate aminotransferase (aspC) from Thermus thermophilus (strain ATCC 27634 / DSM 579 / HB8).